Here is a 372-residue protein sequence, read N- to C-terminus: Testis-specific serine/threonine-protein kinase 5 (372 aa).

The Protein kinase domain maps to 27 to 302 (LLSSKKIGSG…LQQVAAHCWM (276 aa)). ATP contacts are provided by residues 33-41 (IGSGAFSKV) and Lys72. The active-site Proton acceptor is the Asp173. The tract at residues 314 to 372 (GAPREQDHSWSTVAPDNTEPDRDTRHARSKGSSSSSGRTSPRRPSLAQLCNTWKPAPEQ) is disordered. Residues 343–358 (KGSSSSSGRTSPRRPS) show a composition bias toward low complexity.

The protein belongs to the protein kinase superfamily. CAMK Ser/Thr protein kinase family. Mg(2+) serves as cofactor. Autophosphorylated.

It carries out the reaction L-seryl-[protein] + ATP = O-phospho-L-seryl-[protein] + ADP + H(+). The catalysed reaction is L-threonyl-[protein] + ATP = O-phospho-L-threonyl-[protein] + ADP + H(+). With respect to regulation, activated by phosphorylation on Thr-207, potentially by autophosphorylation. In terms of biological role, may be involved in a signaling pathway during male germ cell development or mature sperm function. This Mus musculus (Mouse) protein is Testis-specific serine/threonine-protein kinase 5.